A 295-amino-acid chain; its full sequence is Bifunctional protein FolD (295 aa).

NADP(+)-binding positions include 177 to 179 and Ser202; that span reads GRS.

Belongs to the tetrahydrofolate dehydrogenase/cyclohydrolase family. In terms of assembly, homodimer.

It carries out the reaction (6R)-5,10-methylene-5,6,7,8-tetrahydrofolate + NADP(+) = (6R)-5,10-methenyltetrahydrofolate + NADPH. The catalysed reaction is (6R)-5,10-methenyltetrahydrofolate + H2O = (6R)-10-formyltetrahydrofolate + H(+). It participates in one-carbon metabolism; tetrahydrofolate interconversion. Functionally, catalyzes the oxidation of 5,10-methylenetetrahydrofolate to 5,10-methenyltetrahydrofolate and then the hydrolysis of 5,10-methenyltetrahydrofolate to 10-formyltetrahydrofolate. This is Bifunctional protein FolD from Psychrobacter arcticus (strain DSM 17307 / VKM B-2377 / 273-4).